We begin with the raw amino-acid sequence, 176 residues long: Large ribosomal subunit protein uL10 (176 aa).

The protein belongs to the universal ribosomal protein uL10 family. As to quaternary structure, part of the ribosomal stalk of the 50S ribosomal subunit. The N-terminus interacts with L11 and the large rRNA to form the base of the stalk. The C-terminus forms an elongated spine to which L12 dimers bind in a sequential fashion forming a multimeric L10(L12)X complex.

Forms part of the ribosomal stalk, playing a central role in the interaction of the ribosome with GTP-bound translation factors. In Dehalococcoides mccartyi (strain ATCC BAA-2100 / JCM 16839 / KCTC 5957 / BAV1), this protein is Large ribosomal subunit protein uL10.